The chain runs to 358 residues: Probable branched-chain-amino-acid aminotransferase (358 aa).

Residue K196 is modified to N6-(pyridoxal phosphate)lysine.

The protein belongs to the class-IV pyridoxal-phosphate-dependent aminotransferase family. The cofactor is pyridoxal 5'-phosphate.

The catalysed reaction is L-leucine + 2-oxoglutarate = 4-methyl-2-oxopentanoate + L-glutamate. The enzyme catalyses L-isoleucine + 2-oxoglutarate = (S)-3-methyl-2-oxopentanoate + L-glutamate. It catalyses the reaction L-valine + 2-oxoglutarate = 3-methyl-2-oxobutanoate + L-glutamate. The protein operates within amino-acid biosynthesis; L-isoleucine biosynthesis; L-isoleucine from 2-oxobutanoate: step 4/4. It participates in amino-acid biosynthesis; L-leucine biosynthesis; L-leucine from 3-methyl-2-oxobutanoate: step 4/4. It functions in the pathway amino-acid biosynthesis; L-valine biosynthesis; L-valine from pyruvate: step 4/4. In terms of biological role, acts on leucine, isoleucine and valine. This Staphylococcus epidermidis (strain ATCC 12228 / FDA PCI 1200) protein is Probable branched-chain-amino-acid aminotransferase (ilvE).